A 152-amino-acid chain; its full sequence is Regulator of G-protein signaling 21 (152 aa).

The RGS domain maps to 21–137 (NMDTLLANQA…LKSEIYKKLV (117 aa)).

In terms of tissue distribution, expressed ubiquitously.

In terms of biological role, inhibits signal transduction by increasing the GTPase activity of G protein alpha subunits thereby driving them into their inactive GDP-bound form. The chain is Regulator of G-protein signaling 21 (RGS21) from Homo sapiens (Human).